A 466-amino-acid polypeptide reads, in one-letter code: MTDTQNPKSSNQMWGGRFADGPDAIMEAINASIGFDKRMAAQDIAGSRAHAAMLGATGIVEPSDAQAMGEGLLTVLSEIEAGNFPFSTALEDIHMNVEARLKEIIGEPAGRLHTGRSRNDQVATDFKLWVRDQLDACEAGLLALIRALLDQAEAGADWVMPGFTHLQTAQPVTWGHHMMAYVEMFGRDLSRVRDARARMNESPLGAAALAGTSFPIDRHMTAQALGFDRPAANSLDAVSDRDFALEFLSTASICAMHLSRFAEELVIWSSAQFRFVALSDRFSTGSSIMPQKKNPDAAELIRAKVGRIFGANTALMMVMKGLPLAYSKDMQEDKEQVFDAADNLMLALAAMTGMVSDMTANRESLAQAAGSGFSTATDLADWLVRVLGLPFREAHHVTGALVALAEAKHCDLPDLTLEDMRGVHAGITGDVFDVLGVENSVQSRISYGGTAPVRVREQIARWRALL.

This sequence belongs to the lyase 1 family. Argininosuccinate lyase subfamily.

Its subcellular location is the cytoplasm. It carries out the reaction 2-(N(omega)-L-arginino)succinate = fumarate + L-arginine. It functions in the pathway amino-acid biosynthesis; L-arginine biosynthesis; L-arginine from L-ornithine and carbamoyl phosphate: step 3/3. This Roseobacter denitrificans (strain ATCC 33942 / OCh 114) (Erythrobacter sp. (strain OCh 114)) protein is Argininosuccinate lyase.